The sequence spans 141 residues: Large ribosomal subunit protein uL16c (141 aa).

Residues 1 to 17 (MLSPKRTKYRKPHRGNR) show a composition bias toward basic residues. Residues 1–21 (MLSPKRTKYRKPHRGNRKGQA) are disordered.

The protein belongs to the universal ribosomal protein uL16 family. In terms of assembly, part of the 50S ribosomal subunit.

The protein localises to the plastid. It is found in the chloroplast. This is Large ribosomal subunit protein uL16c from Ostreococcus tauri.